The sequence spans 591 residues: Glutathione hydrolase (591 aa).

The N-terminal stretch at 1-41 (MASKWIEEQPLVHRRDIRISSKSRIAAGLLVLLVLWRYGLP) is a signal peptide. Arginine 122 is an L-glutamate binding site. 3 N-linked (GlcNAc...) asparagine glycosylation sites follow: asparagine 135, asparagine 270, and asparagine 389. Threonine 393 serves as the catalytic Nucleophile. Residues threonine 411, glutamate 432, and 464-465 (SA) each bind L-glutamate. A glycan (N-linked (GlcNAc...) asparagine) is linked at asparagine 534.

This sequence belongs to the gamma-glutamyltransferase family.

The enzyme catalyses an N-terminal (5-L-glutamyl)-[peptide] + an alpha-amino acid = 5-L-glutamyl amino acid + an N-terminal L-alpha-aminoacyl-[peptide]. It carries out the reaction glutathione + H2O = L-cysteinylglycine + L-glutamate. It catalyses the reaction an S-substituted glutathione + H2O = an S-substituted L-cysteinylglycine + L-glutamate. Its pathway is mycotoxin biosynthesis. Gamma-glutamyltransferase; part of the gene cluster that mediates the biosynthesis of the secondary metabolite ustiloxin B, an antimitotic tetrapeptide. First, ustA is processed by the subtilisin-like endoprotease Kex2 that is outside the ustiloxin B gene cluster, at the C-terminal side of Arg-Lys, after transfer to Golgi apparatus through the endoplasmic reticulum (ER). Cleavage by KEX2 generates 16 peptides YAIG-I to YAIG-XVI. To process the precursor peptide further, at least two peptidases are necessary to cleave the N-terminal and C-terminal sides of the Tyr-Ala-Ile-Gly core peptide which serves as backbone for the synthesis of ustiloxin B, through cyclization and modification of the tyrosine with a non-protein coding amino acid, norvaline. One of the two peptidases must be the serine peptidase ustP; and the other pepdidase is probably ustH. Macrocyclization of the core peptide derived from ustA requires the tyrosinase ustQ, as well as the homologous oxidases ustYa and ustYb, and leads to the production of the first cyclization product N-desmethylustiloxin F. For the formation of N-desmethylustiloxin F, three oxidation steps are required, hydroxylation at the benzylic position, hydroxylation at either the aromatic ring of Tyr or beta-position of Ile, and oxidative cyclization. UstQ may catalyze the oxidation of a phenol moiety, whereas the ustYa and ustYb are most likely responsible for the remaining two-step oxidations. N-desmethylustiloxin F is then methylated by ustM to yield ustiloxin F which in turn substrate of the cytochrome P450 monooxygenase ustC which catalyzes the formation of S-deoxyustiloxin H. The flavoprotein monooxygenases ustF1 and ustF2 then participate in the modification of the side chain of S-deoxyustiloxin H, leading to the synthesis of an oxime intermediate, via ustiloxin H. Finally, carboxylative dehydration performed by the cysteine desulfurase-like protein ustD yields ustiloxin B. This chain is Glutathione hydrolase, found in Aspergillus flavus (strain ATCC 200026 / FGSC A1120 / IAM 13836 / NRRL 3357 / JCM 12722 / SRRC 167).